An 863-amino-acid polypeptide reads, in one-letter code: Receptor-like protein 9DC1 (863 aa).

The signal sequence occupies residues methionine 1–serine 21. The Extracellular portion of the chain corresponds to serine 22–glutamine 812. The interval leucine 24–glutamine 90 is N-cap. N-linked (GlcNAc...) asparagine glycans are attached at residues asparagine 71 and asparagine 108. One copy of the LRR 1; degenerate repeat lies at valine 91–leucine 114. LRR repeat units follow at residues serine 115 to glutamate 138 and serine 140 to leucine 163. One copy of the LRR 4; degenerate repeat lies at serine 164–asparagine 190. Residues asparagine 190, asparagine 203, and asparagine 211 are each glycosylated (N-linked (GlcNAc...) asparagine). 6 LRR repeats span residues leucine 191–serine 213, serine 214–leucine 237, leucine 240–serine 262, alanine 264–histidine 286, leucine 287–leucine 311, and threonine 312–lysine 336. The N-linked (GlcNAc...) asparagine glycan is linked to asparagine 261. N-linked (GlcNAc...) asparagine glycosylation is found at asparagine 299 and asparagine 310. The stretch at leucine 337–phenylalanine 357 is one LRR 11; degenerate repeat. 15 LRR repeats span residues asparagine 358–leucine 382, glutamine 383–leucine 406, serine 408–serine 428, lysine 429–glutamine 452, asparagine 454–leucine 476, lysine 477–arginine 500, glutamate 502–valine 524, glycine 525–cysteine 549, tyrosine 551–tyrosine 572, leucine 573–asparagine 597, phenylalanine 599–asparagine 623, leucine 667–aspartate 690, leucine 691–asparagine 714, leucine 715–leucine 739, and phenylalanine 741–glycine 759. N-linked (GlcNAc...) asparagine glycans are attached at residues asparagine 378, asparagine 396, and asparagine 416. Asparagine 464 is a glycosylation site (N-linked (GlcNAc...) asparagine). Asparagine 519 carries N-linked (GlcNAc...) asparagine glycosylation. N-linked (GlcNAc...) asparagine glycosylation is present at asparagine 563. N-linked (GlcNAc...) asparagine glycosylation is found at asparagine 674, asparagine 698, and asparagine 714. Residues asparagine 746 and asparagine 767 are each glycosylated (N-linked (GlcNAc...) asparagine). The tract at residues lysine 760–glutamine 812 is C-cap/acidic domain. A helical transmembrane segment spans residues glycine 813–tryptophan 833. Topologically, residues serine 834 to tyrosine 863 are cytoplasmic.

It belongs to the RLP family.

The protein resides in the cell membrane. Its function is as follows. Involved in plant defense. Confers resistance to the fungal pathogen C.fulvum through recognition of the AVR9 elicitor protein. This Solanum pimpinellifolium (Currant tomato) protein is Receptor-like protein 9DC1.